Here is an 85-residue protein sequence, read N- to C-terminus: uncharacterized protein (85 aa).

A signal peptide spans 1-21 (MRPLLCALAGLALLCAVGALA). Residues 22 to 35 (DGREDRGSPGDTGE) are compositionally biased toward basic and acidic residues. Residues 22-85 (DGREDRGSPG…EVVHLPGSTL (64 aa)) are disordered. The segment covering 36–51 (RPAGPARGPGLEPARG) has biased composition (low complexity).

It localises to the secreted. This is an uncharacterized protein from Homo sapiens (Human).